A 630-amino-acid polypeptide reads, in one-letter code: Chaperone protein DnaK (630 aa).

T198 carries the phosphothreonine; by autocatalysis modification. Residues 604–630 (AAAAPGEEAPKDDDVVDAEFSEVDDKK) form a disordered region. Residues 617-630 (DVVDAEFSEVDDKK) are compositionally biased toward acidic residues.

It belongs to the heat shock protein 70 family.

Its function is as follows. Acts as a chaperone. The sequence is that of Chaperone protein DnaK from Rhizorhabdus wittichii (strain DSM 6014 / CCUG 31198 / JCM 15750 / NBRC 105917 / EY 4224 / RW1) (Sphingomonas wittichii).